The chain runs to 411 residues: MTTPFSSHGLLLLVGLCCLLLITKTKHEKLYEDPSIDPFQCRKVALTICNVSITLFKKMAQLSGNGNILFSPIRVIAAISMLSLGSNGNLSKHILETLRFNKTGLPEAEIHKCFWYLLHSIHQTEETSSLQTGSSVFIHQDLTSVDKFVKGVKELYHSDMISINFTDSSQAKTQINNYVMEISQKAIVNIVKNLESDTFLAVVNYIIWNAKLDSNFGCRSVKVKDYHLGYGMTIKVPMIHNMAMHYLFRVGDLSSTVLMLTLLTGNFATYFIIPDPGKMQKVEQSLTYPHFRRMRRQLLTRLVDLEIPELSLSETHDLESMMSLLGITYVFNSGTNSSDMNDTLQKSFKVVSKAVLTIDEKGSKPSTNSCFKKLGSTDMGRMQLNRPFLIFIQDHTNDVPLFLGRVVNPQN.

An N-terminal signal peptide occupies residues 1-25 (MTTPFSSHGLLLLVGLCCLLLITKT). N-linked (GlcNAc...) asparagine glycans are attached at residues Asn-50, Asn-89, Asn-101, and Asn-164.

This sequence belongs to the serpin family. As to expression, expressed predominantly in epididymis where it is found in the epithelial cells of the caput, corpus and cauda epididymis.

Its subcellular location is the secreted. Inhibitor of serine proteases. The polypeptide is Alpha-1-antitrypsin 1-6 (Mus musculus (Mouse)).